The following is a 419-amino-acid chain: Putative polyketide beta-ketoacyl synthase 2 (419 aa).

Positions 10 to 413 constitute a Ketosynthase family 3 (KS3) domain; it reads TRRTAVTGIG…GSNAALVLRP (404 aa).

It belongs to the thiolase-like superfamily. Beta-ketoacyl-ACP synthases family.

The protein operates within antibiotic biosynthesis; curamycin biosynthesis. In Streptomyces cyaneus (Streptomyces curacoi), this protein is Putative polyketide beta-ketoacyl synthase 2 (curB).